A 415-amino-acid chain; its full sequence is Alpha-N-acetylgalactosaminidase (415 aa).

The N-terminal stretch at 1–17 (MLQKTVLLLALVAQVLM) is a signal peptide. Disulfide bonds link Cys-38–Cys-80, Cys-42–Cys-49, and Cys-127–Cys-158. Substrate is bound by residues 78–79 (DD) and Lys-154. Catalysis depends on Asp-156, which acts as the Nucleophile. A glycan (N-linked (GlcNAc...) asparagine) is linked at Asn-177. A disulfide bridge links Cys-187 with Cys-209. Ser-188 provides a ligand contact to substrate. N-linked (GlcNAc...) asparagine glycosylation is present at Asn-201. Residues Arg-213 and Asp-217 each coordinate substrate. Asp-217 (proton donor) is an active-site residue. Position 322 is a phosphoserine (Ser-322). N-linked (GlcNAc...) asparagine glycosylation is present at Asn-330. Phosphoserine is present on Ser-332. The N-linked (GlcNAc...) asparagine glycan is linked to Asn-385.

Belongs to the glycosyl hydrolase 27 family. In terms of assembly, homodimer.

It is found in the lysosome. The catalysed reaction is Cleavage of non-reducing alpha-(1-&gt;3)-N-acetylgalactosamine residues from human blood group A and AB mucin glycoproteins, Forssman hapten and blood group A lacto series glycolipids.. It carries out the reaction a neolactoside IV(3)-alpha-GalNAc,IV(2)-alpha-Fuc-nLc4Cer(d18:1(4E)) + H2O = a neolactoside IV(2)-alpha-Fuc-nLc4Cer(d18:1(4E)) + N-acetyl-alpha-D-galactosamine. The enzyme catalyses a neolactoside IV(3)-alpha-GalNAc,IV(2)-alpha-Fuc-nLc4Cer(d18:0) + H2O = a neolactoside IV(2)-alpha-Fuc-nLc4Cer(d18:0) + N-acetyl-alpha-D-galactosamine. It catalyses the reaction a globoside IV3GalNAc-Gb4Cer + H2O = N-acetyl-alpha-D-galactosamine + a globoside Gb4Cer. Its function is as follows. Removes terminal alpha-N-acetylgalactosamine residues from glycolipids and glycopeptides. Required for the breakdown of glycolipids. The polypeptide is Alpha-N-acetylgalactosaminidase (Naga) (Rattus norvegicus (Rat)).